Here is a 277-residue protein sequence, read N- to C-terminus: uncharacterized protein (277 aa).

Positions 256–277 are disordered; the sequence is HTTTTTTSPSFTIPSNSSKGVS.

This protein may be involved in virus assembly. Essential for virus function. This is an uncharacterized protein from Saccharolobus solfataricus (Sulfolobus solfataricus).